Here is a 1005-residue protein sequence, read N- to C-terminus: Sorbin and SH3 domain-containing protein 1 homolog (1005 aa).

Disordered stretches follow at residues 1–31 (MMHHPHPFGSNLANSSEPQQPSGQYLNPAAD), 61–86 (LDMKTPTGNSSRYQKPAPPPVDSTPS), 99–153 (YVDP…PHSA), 243–292 (NELK…FNSE), 386–409 (FEEKQNRSPMTSTPSYKEQGFKND), 427–475 (TTKN…TAAA), and 542–622 (MHRK…SNEE). Residues 11-25 (NLANSSEPQQPSGQY) are compositionally biased toward polar residues. Over residues 260 to 269 (VMTSSTENLK) the composition is skewed to polar residues. Low complexity predominate over residues 270–279 (NGNNQQNQQP). A compositionally biased stretch (polar residues) spans 392 to 409 (RSPMTSTPSYKEQGFKND). The span at 448–475 (SDTYPVSSSTTSTWPSHTTTPTTTTAAA) shows a compositional bias: low complexity. In terms of domain architecture, SoHo spans 499–567 (VMSTNMDEPI…FINPSNVTDG (69 aa)). The span at 544–557 (RKGEDGSNEGKEQH) shows a compositional bias: basic and acidic residues. Residues 559 to 589 (INPSNVTDGIGRTTPTASNLGRSRENLSFNQ) show a composition bias toward polar residues. The stretch at 610 to 642 (YNNQERVKQSNEEELLRLKAEKLAEELRKEKER) forms a coiled coil. 3 SH3 domains span residues 683-742 (QPVM…INTG), 745-805 (GDSQ…PIEQ), and 946-1005 (KGSE…VKRH).

May interact with deb-1. In terms of tissue distribution, expressed in body wall muscles, muscle arm attachment sites at the nerve ring, all non-striated muscles, and distal tip cells of the gonad. Highly expressed in the origins and insertions of the vulval and anal depressor muscles and the spicule-associated and diagonal muscles of the male tail. Expressed in small puncta throughout the uterus, stomatointestinal muscle and proximal gonadal sheath tissues. Not expressed in the pharynx.

It is found in the cell junction. It localises to the adherens junction. The protein resides in the cell membrane. Its subcellular location is the focal adhesion. In terms of biological role, required for organization of sarcomeres in body wall muscles and for maintaining normal mitochondrial position in myocytes. This is Sorbin and SH3 domain-containing protein 1 homolog from Caenorhabditis elegans.